The following is a 361-amino-acid chain: Outer mitochondrial transmembrane helix translocase (361 aa).

Over 1-15 the chain is Mitochondrial intermembrane; sequence MVHAEAFSRPLSRNE. Residues 16 to 32 traverse the membrane as a helical segment; that stretch reads VVGLIFRLTIFGAVTYF. Topologically, residues 33 to 361 are cytoplasmic; that stretch reads TIKWMVDAID…QSVLTHVCLD (329 aa). 133–140 provides a ligand contact to ATP; that stretch reads GPPGCGKT. Serine 322 carries the post-translational modification Phosphoserine.

Belongs to the AAA ATPase family. MSP1 subfamily. As to quaternary structure, interacts with GRIA2 and GRIP1 in an ATP-dependent manner. ATAD1-catalyzed ATP hydrolysis disrupts not only its binding to GRIA2 and GRIP1, but also interaction between GRIP1 and GRIA2, leading to AMPAR complex disassembly.

The protein localises to the mitochondrion outer membrane. It localises to the peroxisome membrane. The protein resides in the postsynaptic cell membrane. The enzyme catalyses [protein]-with a C-terminal TM segment(out) + ATP + H2O = [protein]-with a C-terminal TM segment(in) + ADP + phosphate + H(+). Outer mitochondrial translocase required to remove mislocalized tail-anchored transmembrane proteins on mitochondria. Specifically recognizes and binds tail-anchored transmembrane proteins: acts as a dislocase that mediates the ATP-dependent extraction of mistargeted tail-anchored transmembrane proteins from the mitochondrion outer membrane. Also plays a critical role in regulating the surface expression of AMPA receptors (AMPAR), thereby regulating synaptic plasticity and learning and memory. Required for NMDA-stimulated AMPAR internalization and inhibition of GRIA1 and GRIA2 recycling back to the plasma membrane; these activities are ATPase-dependent. The chain is Outer mitochondrial transmembrane helix translocase from Rattus norvegicus (Rat).